Here is a 120-residue protein sequence, read N- to C-terminus: Large ribosomal subunit protein eL18 (120 aa).

This sequence belongs to the eukaryotic ribosomal protein eL18 family.

The sequence is that of Large ribosomal subunit protein eL18 from Thermoplasma acidophilum (strain ATCC 25905 / DSM 1728 / JCM 9062 / NBRC 15155 / AMRC-C165).